Here is a 158-residue protein sequence, read N- to C-terminus: 6,7-dimethyl-8-ribityllumazine synthase (158 aa).

5-amino-6-(D-ribitylamino)uracil contacts are provided by residues Phe-23, 61-63, and 85-87; these read SFE and AVI. (2S)-2-hydroxy-3-oxobutyl phosphate is bound at residue 90–91; the sequence is ET. His-93 acts as the Proton donor in catalysis. A 5-amino-6-(D-ribitylamino)uracil-binding site is contributed by Phe-118. Position 132 (Arg-132) interacts with (2S)-2-hydroxy-3-oxobutyl phosphate.

Belongs to the DMRL synthase family.

It carries out the reaction (2S)-2-hydroxy-3-oxobutyl phosphate + 5-amino-6-(D-ribitylamino)uracil = 6,7-dimethyl-8-(1-D-ribityl)lumazine + phosphate + 2 H2O + H(+). Its pathway is cofactor biosynthesis; riboflavin biosynthesis; riboflavin from 2-hydroxy-3-oxobutyl phosphate and 5-amino-6-(D-ribitylamino)uracil: step 1/2. Its function is as follows. Catalyzes the formation of 6,7-dimethyl-8-ribityllumazine by condensation of 5-amino-6-(D-ribitylamino)uracil with 3,4-dihydroxy-2-butanone 4-phosphate. This is the penultimate step in the biosynthesis of riboflavin. This chain is 6,7-dimethyl-8-ribityllumazine synthase, found in Prochlorococcus marinus (strain MIT 9301).